The sequence spans 63 residues: Large ribosomal subunit protein uL30 (63 aa).

It belongs to the universal ribosomal protein uL30 family. In terms of assembly, part of the 50S ribosomal subunit.

This Rickettsia africae (strain ESF-5) protein is Large ribosomal subunit protein uL30.